A 249-amino-acid polypeptide reads, in one-letter code: 3-deoxy-manno-octulosonate cytidylyltransferase (249 aa).

The protein belongs to the KdsB family.

The protein resides in the cytoplasm. It catalyses the reaction 3-deoxy-alpha-D-manno-oct-2-ulosonate + CTP = CMP-3-deoxy-beta-D-manno-octulosonate + diphosphate. The protein operates within nucleotide-sugar biosynthesis; CMP-3-deoxy-D-manno-octulosonate biosynthesis; CMP-3-deoxy-D-manno-octulosonate from 3-deoxy-D-manno-octulosonate and CTP: step 1/1. Its pathway is bacterial outer membrane biogenesis; lipopolysaccharide biosynthesis. Its function is as follows. Activates KDO (a required 8-carbon sugar) for incorporation into bacterial lipopolysaccharide in Gram-negative bacteria. The chain is 3-deoxy-manno-octulosonate cytidylyltransferase from Aliivibrio fischeri (strain ATCC 700601 / ES114) (Vibrio fischeri).